Reading from the N-terminus, the 285-residue chain is NADH-cytochrome b5 reductase 1 (285 aa).

The helical transmembrane segment at 7 to 23 (LATFSVLVLFYKLFTYS) threads the bilayer. Residues 40-144 (TEFREFELVE…SGPRGFYEYV (105 aa)) form the FAD-binding FR-type domain. Residues 124–139 (GDMK…GPRG) and 150–182 (HLAM…RVTL) each bind FAD.

The protein belongs to the flavoprotein pyridine nucleotide cytochrome reductase family. In terms of assembly, monomer. Component of the 2-(3-amino-3-carboxypropyl)histidine synthase complex composed of DPH1, DPH2, DPH3 and a NADH-dependent reductase, predominantly CBR1. FAD serves as cofactor.

It is found in the mitochondrion outer membrane. It catalyses the reaction 2 Fe(III)-[cytochrome b5] + NADH = 2 Fe(II)-[cytochrome b5] + NAD(+) + H(+). The catalysed reaction is 2 Fe(3+)-[Dph3] + NADH = 2 Fe(2+)-[Dph3] + NAD(+) + H(+). Its pathway is protein modification; peptidyl-diphthamide biosynthesis. NADH-dependent reductase for DPH3 and cytochrome b5. Required for the first step of diphthamide biosynthesis, a post-translational modification of histidine which occurs in elongation factor 2. DPH1 and DPH2 transfer a 3-amino-3-carboxypropyl (ACP) group from S-adenosyl-L-methionine (SAM) to a histidine residue, the reaction is assisted by a reduction system comprising DPH3 and a NADH-dependent reductase, predominantly CBR1. By reducing DPH3, also involved in the formation of the tRNA wobble base modification mcm5s 2U (5-methoxycarbonylmethyl-2-thiouridine), mediated by the elongator complex. The cytochrome b5/NADH cytochrome b5 reductase electron transfer system supports the catalytic activity of several sterol biosynthetic enzymes. The chain is NADH-cytochrome b5 reductase 1 (CBR1) from Candida glabrata (strain ATCC 2001 / BCRC 20586 / JCM 3761 / NBRC 0622 / NRRL Y-65 / CBS 138) (Yeast).